The following is a 384-amino-acid chain: 1-deoxy-D-xylulose 5-phosphate reductoisomerase (384 aa).

Residues T10, G11, S12, I13, G36, N38, and N122 each contribute to the NADPH site. K123 is a binding site for 1-deoxy-D-xylulose 5-phosphate. E124 is a binding site for NADPH. D148 is a Mn(2+) binding site. Positions 149, 150, 174, and 197 each coordinate 1-deoxy-D-xylulose 5-phosphate. E150 is a binding site for Mn(2+). G203 contacts NADPH. S210, N215, K216, and E219 together coordinate 1-deoxy-D-xylulose 5-phosphate. E219 contacts Mn(2+).

This sequence belongs to the DXR family. Requires Mg(2+) as cofactor. Mn(2+) serves as cofactor.

The enzyme catalyses 2-C-methyl-D-erythritol 4-phosphate + NADP(+) = 1-deoxy-D-xylulose 5-phosphate + NADPH + H(+). The protein operates within isoprenoid biosynthesis; isopentenyl diphosphate biosynthesis via DXP pathway; isopentenyl diphosphate from 1-deoxy-D-xylulose 5-phosphate: step 1/6. Catalyzes the NADPH-dependent rearrangement and reduction of 1-deoxy-D-xylulose-5-phosphate (DXP) to 2-C-methyl-D-erythritol 4-phosphate (MEP). This is 1-deoxy-D-xylulose 5-phosphate reductoisomerase from Geotalea daltonii (strain DSM 22248 / JCM 15807 / FRC-32) (Geobacter daltonii).